We begin with the raw amino-acid sequence, 407 residues long: Na(+)-translocating NADH-quinone reductase subunit F (407 aa).

The helical transmembrane segment at 3–23 threads the bilayer; sequence IILGVVMFTLIVLALVLVILF. The 2Fe-2S ferredoxin-type domain maps to 32-126; sequence GDITISINGD…DMDIELPEEI (95 aa). [2Fe-2S] cluster-binding residues include Cys-69, Cys-75, Cys-78, and Cys-110. The 141-residue stretch at 129–269 folds into the FAD-binding FR-type domain; the sequence is VKKWECTVIS…SGPFGEFFAK (141 aa). A catalytic region spans residues 272-389; sequence DAEMVFIGGG…PMMNAAVIGM (118 aa).

This sequence belongs to the NqrF family. Composed of six subunits; NqrA, NqrB, NqrC, NqrD, NqrE and NqrF. [2Fe-2S] cluster is required as a cofactor. It depends on FAD as a cofactor.

It is found in the cell inner membrane. The catalysed reaction is a ubiquinone + n Na(+)(in) + NADH + H(+) = a ubiquinol + n Na(+)(out) + NAD(+). Functionally, NQR complex catalyzes the reduction of ubiquinone-1 to ubiquinol by two successive reactions, coupled with the transport of Na(+) ions from the cytoplasm to the periplasm. The first step is catalyzed by NqrF, which accepts electrons from NADH and reduces ubiquinone-1 to ubisemiquinone by a one-electron transfer pathway. This chain is Na(+)-translocating NADH-quinone reductase subunit F, found in Vibrio vulnificus (strain CMCP6).